Here is a 326-residue protein sequence, read N- to C-terminus: Phospho-N-acetylmuramoyl-pentapeptide-transferase (326 aa).

9 helical membrane passes run 3 to 23 (ISIS…PAFI), 51 to 71 (TMGG…VALF), 79 to 99 (VGMI…DDFL), 115 to 135 (LALQ…GGDM), 138 to 158 (VFGY…FWLV), 169 to 189 (GIDG…GVIA), 195 to 215 (MDIL…FVFN), 221 to 243 (VFMG…MALH), and 306 to 326 (FFFW…LYLM).

The protein belongs to the glycosyltransferase 4 family. MraY subfamily. The cofactor is Mg(2+).

It localises to the cell membrane. It carries out the reaction UDP-N-acetyl-alpha-D-muramoyl-L-alanyl-gamma-D-glutamyl-L-lysyl-D-alanyl-D-alanine + di-trans,octa-cis-undecaprenyl phosphate = Mur2Ac(oyl-L-Ala-gamma-D-Glu-L-Lys-D-Ala-D-Ala)-di-trans,octa-cis-undecaprenyl diphosphate + UMP. Its pathway is cell wall biogenesis; peptidoglycan biosynthesis. Functionally, catalyzes the initial step of the lipid cycle reactions in the biosynthesis of the cell wall peptidoglycan: transfers peptidoglycan precursor phospho-MurNAc-pentapeptide from UDP-MurNAc-pentapeptide onto the lipid carrier undecaprenyl phosphate, yielding undecaprenyl-pyrophosphoryl-MurNAc-pentapeptide, known as lipid I. In Streptococcus pneumoniae (strain Taiwan19F-14), this protein is Phospho-N-acetylmuramoyl-pentapeptide-transferase.